The chain runs to 296 residues: Cytidine deaminase (296 aa).

CMP/dCMP-type deaminase domains follow at residues 47–167 (TEAE…FGPK) and 186–296 (DSSD…VDPV). 88-90 (NLE) contributes to the substrate binding site. Residue histidine 101 participates in Zn(2+) binding. Glutamate 103 acts as the Proton donor in catalysis. Residues cysteine 128 and cysteine 131 each contribute to the Zn(2+) site.

The protein belongs to the cytidine and deoxycytidylate deaminase family. As to quaternary structure, homodimer. Zn(2+) is required as a cofactor.

It carries out the reaction cytidine + H2O + H(+) = uridine + NH4(+). It catalyses the reaction 2'-deoxycytidine + H2O + H(+) = 2'-deoxyuridine + NH4(+). Functionally, this enzyme scavenges exogenous and endogenous cytidine and 2'-deoxycytidine for UMP synthesis. The sequence is that of Cytidine deaminase from Shewanella sp. (strain MR-4).